Here is a 983-residue protein sequence, read N- to C-terminus: Bifunctional glutamine synthetase adenylyltransferase/adenylyl-removing enzyme (983 aa).

Residues 1–468 are adenylyl removase; the sequence is MTVENAKALF…KQYAALFEQA (468 aa). The interval 473 to 983 is adenylyl transferase; the sequence is AASGNLVFTG…FDKLVGHGAD (511 aa).

Belongs to the GlnE family. Mg(2+) is required as a cofactor.

It catalyses the reaction [glutamine synthetase]-O(4)-(5'-adenylyl)-L-tyrosine + phosphate = [glutamine synthetase]-L-tyrosine + ADP. The catalysed reaction is [glutamine synthetase]-L-tyrosine + ATP = [glutamine synthetase]-O(4)-(5'-adenylyl)-L-tyrosine + diphosphate. Involved in the regulation of glutamine synthetase GlnA, a key enzyme in the process to assimilate ammonia. When cellular nitrogen levels are high, the C-terminal adenylyl transferase (AT) inactivates GlnA by covalent transfer of an adenylyl group from ATP to specific tyrosine residue of GlnA, thus reducing its activity. Conversely, when nitrogen levels are low, the N-terminal adenylyl removase (AR) activates GlnA by removing the adenylyl group by phosphorolysis, increasing its activity. The regulatory region of GlnE binds the signal transduction protein PII (GlnB) which indicates the nitrogen status of the cell. The protein is Bifunctional glutamine synthetase adenylyltransferase/adenylyl-removing enzyme of Brucella melitensis biotype 1 (strain ATCC 23456 / CCUG 17765 / NCTC 10094 / 16M).